The sequence spans 469 residues: Mitochondrial adenyl nucleotide antiporter SLC25A25 (469 aa).

The tract at residues 1–165 is regulatory N-terminal domain; it reads MLCLCLYVPV…LYWKHSTIFD (165 aa). The Mitochondrial intermembrane portion of the chain corresponds to 1–189; it reads MLCLCLYVPV…ERQTGMWWRH (189 aa). EF-hand domains lie at 47-80, 78-113, and 114-149; these read TYRQ…QDHE, DHEK…LGVK, and ISEQ…HPVE. D60, D62, D64, Q66, and E71 together coordinate Ca(2+). Residues 151-160 form a linker region region; that stretch reads IPEIILYWKH. The C-terminal transmembrane transporter domain stretch occupies residues 166 to 469; it reads VGENLTVPDE…LKITLGVQSR (304 aa). Solcar repeat units lie at residues 184-270, 278-363, and 375-463; these read GMWW…IKRL, LRIH…LKNA, and PGVF…LKIT. The helical transmembrane segment at 190–207 threads the bilayer; the sequence is LVAGGGAGAVSRTCTAPL. The Mitochondrial matrix segment spans residues 208 to 244; the sequence is DRLKVLMQVHASRSNNMGIVGGFTQMIREGGARSLWR. The chain crosses the membrane as a helical span at residues 245-264; it reads GNGINVLKIAPESAIKFMAY. Residues 265–287 are Mitochondrial intermembrane-facing; it reads EQIKRLVGSDQETLRIHERLVAG. Residues 288-301 form a helical membrane-spanning segment; sequence SLAGAIAQSSIYPM. Residues 302–337 lie on the Mitochondrial matrix side of the membrane; that stretch reads EVLKTRMALRKTGQYSGMLDCARRILAREGVAAFYK. Residues 338 to 357 traverse the membrane as a helical segment; that stretch reads GYVPNMLGIIPYAGIDLAVY. Topologically, residues 358-380 are mitochondrial intermembrane; it reads ETLKNAWLQHYAVNSADPGVFVL. Residues 381–398 form a helical membrane-spanning segment; it reads LACGTMSSTCGQLASYPL. Topologically, residues 399–437 are mitochondrial matrix; it reads ALVRTRMQAQASIEGAPEVTMSSLFKHILRTEGAFGLYR. A helical transmembrane segment spans residues 438–457; sequence GLAPNFMKVIPAVSISYVVY. The Mitochondrial intermembrane portion of the chain corresponds to 458–469; the sequence is ENLKITLGVQSR.

It belongs to the mitochondrial carrier (TC 2.A.29) family. In terms of tissue distribution, widely expressed. Expressed in fetal and adult liver, skeletal muscle, testis, ovary, hippocampus and caudate nucleus. Expressed in all tissues tested. As to expression, expression is restricted to kidney and lung.

Its subcellular location is the mitochondrion inner membrane. It catalyses the reaction Mg(2+)(out) + phosphate(in) + ATP(out) = Mg(2+)(in) + phosphate(out) + ATP(in). Its activity is regulated as follows. Activated by an increase in cytosolic calcium levels that induce a conformational change of the N-terminal regulatory domain, uncapping the channel and allowing transport. Electroneutral antiporter that most probably mediates the transport of adenyl nucleotides through the inner mitochondrial membrane. Originally identified as an ATP-magnesium/inorganic phosphate antiporter, it could have a broader specificity for adenyl nucleotides. By regulating the mitochondrial matrix adenyl nucleotide pool could adapt to changing cellular energetic demands and indirectly regulate adenyl nucleotide-dependent metabolic pathways. This Homo sapiens (Human) protein is Mitochondrial adenyl nucleotide antiporter SLC25A25.